The chain runs to 104 residues: Large ribosomal subunit protein uL24 (104 aa).

The protein belongs to the universal ribosomal protein uL24 family. In terms of assembly, part of the 50S ribosomal subunit.

Its function is as follows. One of two assembly initiator proteins, it binds directly to the 5'-end of the 23S rRNA, where it nucleates assembly of the 50S subunit. Functionally, one of the proteins that surrounds the polypeptide exit tunnel on the outside of the subunit. The polypeptide is Large ribosomal subunit protein uL24 (Herminiimonas arsenicoxydans).